Consider the following 389-residue polypeptide: Formate-dependent phosphoribosylglycinamide formyltransferase (389 aa).

Residues Glu-15 to Leu-16 and Glu-75 contribute to the N(1)-(5-phospho-beta-D-ribosyl)glycinamide site. ATP-binding positions include Arg-107, Lys-148, Ser-153–Gln-158, Glu-188–Leu-191, and Glu-196. Positions Asp-112–Leu-302 constitute an ATP-grasp domain. Mg(2+) is bound by residues Glu-261 and Glu-273. N(1)-(5-phospho-beta-D-ribosyl)glycinamide-binding positions include Asp-280, Lys-350, and Arg-357–Arg-358.

Belongs to the PurK/PurT family. In terms of assembly, homodimer.

The catalysed reaction is N(1)-(5-phospho-beta-D-ribosyl)glycinamide + formate + ATP = N(2)-formyl-N(1)-(5-phospho-beta-D-ribosyl)glycinamide + ADP + phosphate + H(+). Its pathway is purine metabolism; IMP biosynthesis via de novo pathway; N(2)-formyl-N(1)-(5-phospho-D-ribosyl)glycinamide from N(1)-(5-phospho-D-ribosyl)glycinamide (formate route): step 1/1. In terms of biological role, involved in the de novo purine biosynthesis. Catalyzes the transfer of formate to 5-phospho-ribosyl-glycinamide (GAR), producing 5-phospho-ribosyl-N-formylglycinamide (FGAR). Formate is provided by PurU via hydrolysis of 10-formyl-tetrahydrofolate. This chain is Formate-dependent phosphoribosylglycinamide formyltransferase, found in Synechococcus sp. (strain WH7803).